The following is a 296-amino-acid chain: Acetaldehyde dehydrogenase (296 aa).

15 to 18 (SGNI) lines the NAD(+) pocket. C132 functions as the Acyl-thioester intermediate in the catalytic mechanism. NAD(+) contacts are provided by residues 164-172 (SAGPATRAN) and N274.

This sequence belongs to the acetaldehyde dehydrogenase family. In terms of assembly, interacts with MhpE.

It catalyses the reaction acetaldehyde + NAD(+) + CoA = acetyl-CoA + NADH + H(+). Its pathway is aromatic compound metabolism; 3-phenylpropanoate degradation. In terms of biological role, catalyzes the conversion of acetaldehyde to acetyl-CoA, using NAD(+) and coenzyme A. Is the final enzyme in the meta-cleavage pathway for the degradation of aromatic compounds. This chain is Acetaldehyde dehydrogenase, found in Pectobacterium atrosepticum (strain SCRI 1043 / ATCC BAA-672) (Erwinia carotovora subsp. atroseptica).